The following is a 306-amino-acid chain: tRNA (guanine-N(1)-)-methyltransferase (306 aa).

Residues glycine 157 and 182–187 (IGDYVL) contribute to the S-adenosyl-L-methionine site.

The protein belongs to the RNA methyltransferase TrmD family. Homodimer.

Its subcellular location is the cytoplasm. The enzyme catalyses guanosine(37) in tRNA + S-adenosyl-L-methionine = N(1)-methylguanosine(37) in tRNA + S-adenosyl-L-homocysteine + H(+). Functionally, specifically methylates guanosine-37 in various tRNAs. The chain is tRNA (guanine-N(1)-)-methyltransferase from Bifidobacterium adolescentis (strain ATCC 15703 / DSM 20083 / NCTC 11814 / E194a).